The following is a 335-amino-acid chain: GTPase Obg (335 aa).

Residues 1–158 enclose the Obg domain; the sequence is MFLDQITIEL…RQVELELKLI (158 aa). The 176-residue stretch at 159–334 folds into the OBG-type G domain; the sequence is ADIGLVGFPN…LNSLFTNRLS (176 aa). GTP contacts are provided by residues 165–172, 190–194, 215–218, 285–288, and 315–317; these read GFPNAGKS, FTTLQ, DIPG, NKID, and SGL. S172 and T192 together coordinate Mg(2+).

Belongs to the TRAFAC class OBG-HflX-like GTPase superfamily. OBG GTPase family. In terms of assembly, monomer. The cofactor is Mg(2+).

The protein localises to the cytoplasm. An essential GTPase which binds GTP, GDP and possibly (p)ppGpp with moderate affinity, with high nucleotide exchange rates and a fairly low GTP hydrolysis rate. Plays a role in control of the cell cycle, stress response, ribosome biogenesis and in those bacteria that undergo differentiation, in morphogenesis control. This chain is GTPase Obg, found in Chlamydia caviae (strain ATCC VR-813 / DSM 19441 / 03DC25 / GPIC) (Chlamydophila caviae).